Consider the following 510-residue polypeptide: MTEAFSAIHELGGIRGIGGIRGIRRSSYWQQKFLYLFLFQDHFYGIVYNSFVNESEYVRNTTIHGLTYGFNFVMLKHLMKKLHQSQSPSILFDELTNQSQFVREILMIASNPILQPRSRDSAGRINEWNGYQSIHSVFPFIEDRIHNPSNYLDITIPHCVHPEILIRICRKHILDISFLHLLRLMLHTSNHFRIPNSSNRVINLFYRFLWNFCTQSIEYCLIHLWKQIYKFQCTPFWFLFDKTEFIRKIQSVSKKSNPRPDRTISRKNCLIHYVRSQNHLILVIDGEGDFESIKDWKILFIILWSKYLHSWLDPCRISVKNLSNNPLSILGYILYTKNDLIKIRIRFFDFSINTSLVIKGFCGIIPIISLIRSLAKEGFCNTSGRPICKLSWTTLTDNEIIYRFDRIMRNIFYYYSGCCKKKGLYQLQYIFRFSCAKTLACRHKSTIRTVWKRYGSNFARNYVVLEGVKSIPSNLWQRESDEKRFWCLTITQTNFLADLLRKSKNIYSVG.

Belongs to the intron maturase 2 family. MatK subfamily.

The protein localises to the plastid. In terms of biological role, usually encoded in the trnK tRNA gene intron. Probably assists in splicing its own and other chloroplast group II introns. This is Maturase K from Aneura mirabilis (Parasitic liverwort).